The following is a 250-amino-acid chain: Recombination protein RecR (250 aa).

A C4-type zinc finger spans residues 56–71; the sequence is CRICHNISQEDVCRIC. The 149-residue stretch at 79–227 folds into the Toprim domain; the sequence is SIICVVEESK…TVTRLASGIP (149 aa). The segment at 148 to 172 is disordered; that stretch reads LGDADTPADGESSGADAAETGNAKT.

This sequence belongs to the RecR family.

Its function is as follows. May play a role in DNA repair. It seems to be involved in an RecBC-independent recombinational process of DNA repair. It may act with RecF and RecO. The protein is Recombination protein RecR of Corynebacterium jeikeium (strain K411).